A 563-amino-acid polypeptide reads, in one-letter code: NAD(P)H-quinone oxidoreductase chain 4 (563 aa).

15 helical membrane-spanning segments follow: residues 25–45, 56–76, 90–110, 111–131, 133–153, 157–177, 189–209, 230–250, 264–284, 298–318, 335–355, 356–376, 397–417, 438–458, and 485–505; these read FPWL…VPFI, WFAL…YLYG, VSWL…ISMP, LILL…PVTF, PKLF…VFAV, LLFF…LAIW, FIIY…AMGF, GFQL…LPIV, TAPV…YALM, FAPL…LTSF, MGFV…GAML, QMIS…ATYD, FALW…SGFV, IVIA…LLSM, and VYII…PRLM.

The protein belongs to the complex I subunit 4 family.

The protein localises to the cellular thylakoid membrane. It catalyses the reaction a plastoquinone + NADH + (n+1) H(+)(in) = a plastoquinol + NAD(+) + n H(+)(out). The catalysed reaction is a plastoquinone + NADPH + (n+1) H(+)(in) = a plastoquinol + NADP(+) + n H(+)(out). Functionally, NDH-1 shuttles electrons from NAD(P)H, via FMN and iron-sulfur (Fe-S) centers, to quinones in the respiratory chain. The immediate electron acceptor for the enzyme in this species is believed to be plastoquinone. Couples the redox reaction to proton translocation (for every two electrons transferred, four hydrogen ions are translocated across the cytoplasmic membrane), and thus conserves the redox energy in a proton gradient. The polypeptide is NAD(P)H-quinone oxidoreductase chain 4 (Prochlorococcus marinus (strain MIT 9303)).